The primary structure comprises 439 residues: Probable RNA-binding protein 23 (439 aa).

A disordered region spans residues 13–159 (MLEAPYKKEE…PVREPVDNLS (147 aa)). Over residues 17 to 34 (PYKKEEDEQQRKEVKKDY) the composition is skewed to basic and acidic residues. The segment covering 36 to 57 (SNTTSSTSNSGNETSGSSTIGE) has biased composition (low complexity). The segment covering 60-90 (KKKRSRSHNKSRDRKRSRSRDRDRYRRRNSR) has biased composition (basic residues). A compositionally biased stretch (basic and acidic residues) spans 103–125 (RSWDRRHGSESRSRDHRREDRVH). Ser128 and Ser149 each carry phosphoserine. The segment covering 144 to 159 (HFREKSPVREPVDNLS) has biased composition (basic and acidic residues). RRM domains lie at 166–243 (RTVF…ASQA) and 263–341 (MRLY…HVTE).

Belongs to the splicing factor SR family. Post-translationally, aryl sulfonamide anticancer drugs, such as indisulam (E7070) or E7820, promote ubiquitination and subsequent degradation by the DCX(DCAF15) complex. Aryl sulfonamide anticancer drugs change the substrate specificity of DCAF15 by acting as a molecular glue that promotes binding between DCAF15 and weak affinity interactor RBM23. In terms of tissue distribution, highly expressed in placenta, liver, skeletal muscle, heart and kidney. Expressed at lower levels in the colon, thymus, spleen, small intestine and lung.

The protein localises to the nucleus. Its function is as follows. RNA-binding protein that acts both as a transcription coactivator and pre-mRNA splicing factor. Regulates steroid hormone receptor-mediated transcription, independently of the pre-mRNA splicing factor activity. In Homo sapiens (Human), this protein is Probable RNA-binding protein 23.